We begin with the raw amino-acid sequence, 154 residues long: 6,7-dimethyl-8-ribityllumazine synthase (154 aa).

5-amino-6-(D-ribitylamino)uracil is bound by residues Phe-21, 55–57, and 79–81; these read AFE and CVI. 84–85 is a (2S)-2-hydroxy-3-oxobutyl phosphate binding site; sequence AT. The active-site Proton donor is His-87. Residue Phe-112 participates in 5-amino-6-(D-ribitylamino)uracil binding. Residue Arg-126 coordinates (2S)-2-hydroxy-3-oxobutyl phosphate.

Belongs to the DMRL synthase family. In terms of assembly, forms an icosahedral capsid composed of 60 subunits, arranged as a dodecamer of pentamers.

It catalyses the reaction (2S)-2-hydroxy-3-oxobutyl phosphate + 5-amino-6-(D-ribitylamino)uracil = 6,7-dimethyl-8-(1-D-ribityl)lumazine + phosphate + 2 H2O + H(+). The protein operates within cofactor biosynthesis; riboflavin biosynthesis; riboflavin from 2-hydroxy-3-oxobutyl phosphate and 5-amino-6-(D-ribitylamino)uracil: step 1/2. Functionally, catalyzes the formation of 6,7-dimethyl-8-ribityllumazine by condensation of 5-amino-6-(D-ribitylamino)uracil with 3,4-dihydroxy-2-butanone 4-phosphate. This is the penultimate step in the biosynthesis of riboflavin. In Staphylococcus aureus (strain MRSA252), this protein is 6,7-dimethyl-8-ribityllumazine synthase.